Here is a 236-residue protein sequence, read N- to C-terminus: Purine nucleoside phosphorylase DeoD-type (236 aa).

Residue H4 coordinates a purine D-ribonucleoside. Residues G20, R24, R43, and 87–90 (RVGT) contribute to the phosphate site. A purine D-ribonucleoside is bound by residues 179–181 (EME) and 203–204 (SD). D204 serves as the catalytic Proton donor.

Belongs to the PNP/UDP phosphorylase family. Homohexamer; trimer of homodimers.

It carries out the reaction a purine D-ribonucleoside + phosphate = a purine nucleobase + alpha-D-ribose 1-phosphate. The catalysed reaction is a purine 2'-deoxy-D-ribonucleoside + phosphate = a purine nucleobase + 2-deoxy-alpha-D-ribose 1-phosphate. Functionally, catalyzes the reversible phosphorolytic breakdown of the N-glycosidic bond in the beta-(deoxy)ribonucleoside molecules, with the formation of the corresponding free purine bases and pentose-1-phosphate. This Streptococcus thermophilus (strain ATCC BAA-491 / LMD-9) protein is Purine nucleoside phosphorylase DeoD-type.